A 345-amino-acid chain; its full sequence is Membrane progestin receptor alpha (345 aa).

Over 1-74 the chain is Cytoplasmic; it reads MAMAVAQKFN…FQRHNEAVNV (74 aa). A helical membrane pass occupies residues 75–95; the sequence is WTHLLAALALLLRLIGLAASV. Residues 96 to 102 lie on the Extracellular side of the membrane; that stretch reads DFREDPH. A helical membrane pass occupies residues 103 to 123; it reads ALPLFFIVLASFTYLSFSAVA. The Cytoplasmic segment spans residues 124-136; sequence HLLQAKSEFWHYS. Residues 137-157 form a helical membrane-spanning segment; it reads FFFLDYVGVAVYQFGSALAHF. The Extracellular segment spans residues 158-168; the sequence is YYAIEPSWHDK. Residues 169 to 189 form a helical membrane-spanning segment; sequence VQAIFLPTAAFLAWLSCAGSC. The Cytoplasmic portion of the chain corresponds to 190-243; that stretch reads YNKYSQKPGLLGRIFQEAPSALAYVLDISPVLHRIIVSPLPAEEDPALLYHKCQ. A helical membrane pass occupies residues 244–264; that stretch reads VVFFLLAAAFFSTVMPESWFP. At 265–268 the chain is on the extracellular side; the sequence is GSCH. The chain crosses the membrane as a helical span at residues 269–289; the sequence is IFGQGHQVFHVFLVLCTLAQL. The Cytoplasmic portion of the chain corresponds to 290–315; sequence EAVTLDYQARRGIYEPLHARWPHNFS. The chain crosses the membrane as a helical span at residues 316 to 336; it reads GLFLLTVASSSLTALLLSQLV. Residues 337–345 are Extracellular-facing; sequence RRKLHQKTK.

It belongs to the ADIPOR family. In terms of tissue distribution, detected in most adult tissues. Higher expression found in white fat and liver than brown fat and skeletal muscle.

It localises to the cell membrane. Functionally, plasma membrane progesterone (P4) receptor coupled to G proteins. Seems to act through a G(i) mediated pathway. May be involved in oocyte maturation. Involved in neurosteroid inhibition of apoptosis. Also binds dehydroepiandrosterone (DHEA), pregnanolone, pregnenolone and allopregnanolone. The sequence is that of Membrane progestin receptor alpha from Mus musculus (Mouse).